A 311-amino-acid polypeptide reads, in one-letter code: ATP synthase gamma chain (311 aa).

It belongs to the ATPase gamma chain family. In terms of assembly, F-type ATPases have 2 components, CF(1) - the catalytic core - and CF(0) - the membrane proton channel. CF(1) has five subunits: alpha(3), beta(3), gamma(1), delta(1), epsilon(1). CF(0) has three main subunits: a, b and c.

The protein resides in the cell membrane. Produces ATP from ADP in the presence of a proton gradient across the membrane. The gamma chain is believed to be important in regulating ATPase activity and the flow of protons through the CF(0) complex. This is ATP synthase gamma chain from Limosilactobacillus fermentum (strain NBRC 3956 / LMG 18251) (Lactobacillus fermentum).